A 340-amino-acid polypeptide reads, in one-letter code: Putative RRN3-like protein RRN3P2 (340 aa).

The protein belongs to the RRN3 family.

This is Putative RRN3-like protein RRN3P2 (RRN3P2) from Homo sapiens (Human).